The primary structure comprises 293 residues: Glutamyl-Q tRNA(Asp) synthetase (293 aa).

L-glutamate-binding positions include 4 to 8 (RYAPS) and Glu40. Positions 7–17 (PSPSGDLHFGN) match the 'HIGH' region motif. Zn(2+) contacts are provided by Cys92, Cys94, Tyr113, and Cys117. Residues Tyr180 and Arg198 each contribute to the L-glutamate site. The 'KMSKS' region signature appears at 236–240 (RLAKR). Lys239 is an ATP binding site.

This sequence belongs to the class-I aminoacyl-tRNA synthetase family. GluQ subfamily. Requires Zn(2+) as cofactor.

Catalyzes the tRNA-independent activation of glutamate in presence of ATP and the subsequent transfer of glutamate onto a tRNA(Asp). Glutamate is transferred on the 2-amino-5-(4,5-dihydroxy-2-cyclopenten-1-yl) moiety of the queuosine in the wobble position of the QUC anticodon. The chain is Glutamyl-Q tRNA(Asp) synthetase from Corynebacterium glutamicum (strain ATCC 13032 / DSM 20300 / JCM 1318 / BCRC 11384 / CCUG 27702 / LMG 3730 / NBRC 12168 / NCIMB 10025 / NRRL B-2784 / 534).